We begin with the raw amino-acid sequence, 423 residues long: Histidine--tRNA ligase (423 aa).

Belongs to the class-II aminoacyl-tRNA synthetase family. Homodimer.

It localises to the cytoplasm. It catalyses the reaction tRNA(His) + L-histidine + ATP = L-histidyl-tRNA(His) + AMP + diphosphate + H(+). The chain is Histidine--tRNA ligase from Geobacillus sp. (strain WCH70).